Here is a 68-residue protein sequence, read N- to C-terminus: MARVTVEDCLEKVDNRFLLVMLASKRVKQLFKGARPLIDNRGANKNVVVSLREIAAGKIGCEIGKKGR.

The protein belongs to the RNA polymerase subunit omega family. In terms of assembly, the RNAP catalytic core consists of 2 alpha, 1 beta, 1 beta' and 1 omega subunit. When a sigma factor is associated with the core the holoenzyme is formed, which can initiate transcription.

It catalyses the reaction RNA(n) + a ribonucleoside 5'-triphosphate = RNA(n+1) + diphosphate. Promotes RNA polymerase assembly. Latches the N- and C-terminal regions of the beta' subunit thereby facilitating its interaction with the beta and alpha subunits. The chain is DNA-directed RNA polymerase subunit omega from Citrifermentans bemidjiense (strain ATCC BAA-1014 / DSM 16622 / JCM 12645 / Bem) (Geobacter bemidjiensis).